The primary structure comprises 408 residues: MNSNISAQNDSALNSTIQNGTKINQFIQPPWQIALWSVAYSIIVIVSLVGNIIVMWIIIAHKRMRTVTNYFLVNLAFAEASMSAFNTVINFTYAIHNHWYYGLIYCKFHNFFPISAVFTSIYSMTAIALDRYMAIIHPLKPRLSATATKIVICVIWSFSFCMAFPLGYYADVYPMEGGDICYLNWPDSEENRKYEQVYQVLVFCLIYILPLLVIGCAYTFIGMTLWASEIPGDSSDRYHEQVVAKRKVVKMMIVVVCTFAICWLPFHIFFLLQTLHEMTQKFYQQFYLAIMWLAMSSTMYNPIIYCCLNDRFRIGFKHVFRWCPFIRAGEYEGLELKSTRYLQTQSSMYKISRIETTVSSVLNTNDEEAEENGKSSKRLSLDLTSNGSSRSVCKTMSDSSSFYSNNLA.

Over 1–32 (MNSNISAQNDSALNSTIQNGTKINQFIQPPWQ) the chain is Extracellular. Residues asparagine 4, asparagine 9, asparagine 14, and asparagine 19 are each glycosylated (N-linked (GlcNAc...) asparagine). Residues 33–55 (IALWSVAYSIIVIVSLVGNIIVM) traverse the membrane as a helical segment. The Cytoplasmic portion of the chain corresponds to 56–65 (WIIIAHKRMR). A helical membrane pass occupies residues 66–87 (TVTNYFLVNLAFAEASMSAFNT). Residues 88-107 (VINFTYAIHNHWYYGLIYCK) are Extracellular-facing. Cysteine 106 and cysteine 181 are oxidised to a cystine. The chain crosses the membrane as a helical span at residues 108–129 (FHNFFPISAVFTSIYSMTAIAL). Over 130-149 (DRYMAIIHPLKPRLSATATK) the chain is Cytoplasmic. A helical transmembrane segment spans residues 150-170 (IVICVIWSFSFCMAFPLGYYA). Residues 171-196 (DVYPMEGGDICYLNWPDSEENRKYEQ) lie on the Extracellular side of the membrane. The helical transmembrane segment at 197 to 221 (VYQVLVFCLIYILPLLVIGCAYTFI) threads the bilayer. At 222-250 (GMTLWASEIPGDSSDRYHEQVVAKRKVVK) the chain is on the cytoplasmic side. A helical membrane pass occupies residues 251 to 272 (MMIVVVCTFAICWLPFHIFFLL). The Extracellular portion of the chain corresponds to 273–283 (QTLHEMTQKFY). A helical membrane pass occupies residues 284 to 308 (QQFYLAIMWLAMSSTMYNPIIYCCL). The Cytoplasmic portion of the chain corresponds to 309–408 (NDRFRIGFKH…SSSFYSNNLA (100 aa)). Cysteine 323 carries S-palmitoyl cysteine lipidation. The disordered stretch occupies residues 366–408 (DEEAEENGKSSKRLSLDLTSNGSSRSVCKTMSDSSSFYSNNLA). The segment covering 382-408 (DLTSNGSSRSVCKTMSDSSSFYSNNLA) has biased composition (polar residues).

The protein belongs to the G-protein coupled receptor 1 family.

It localises to the cell membrane. Functionally, this is a receptor for the tachykinin neuropeptide substance P. It is probably associated with G proteins that activate a phosphatidylinositol-calcium second messenger system. The polypeptide is Substance-P receptor (TACR1) (Aquarana catesbeiana (American bullfrog)).